The primary structure comprises 356 residues: UDP-N-acetylglucosamine--N-acetylmuramyl-(pentapeptide) pyrophosphoryl-undecaprenol N-acetylglucosamine transferase (356 aa).

UDP-N-acetyl-alpha-D-glucosamine contacts are provided by residues 15 to 17, Asn127, Arg163, Ser191, Ile244, 263 to 268, and Gln288; these read TGG and ALTVSE.

Belongs to the glycosyltransferase 28 family. MurG subfamily.

The protein resides in the cell inner membrane. It carries out the reaction di-trans,octa-cis-undecaprenyl diphospho-N-acetyl-alpha-D-muramoyl-L-alanyl-D-glutamyl-meso-2,6-diaminopimeloyl-D-alanyl-D-alanine + UDP-N-acetyl-alpha-D-glucosamine = di-trans,octa-cis-undecaprenyl diphospho-[N-acetyl-alpha-D-glucosaminyl-(1-&gt;4)]-N-acetyl-alpha-D-muramoyl-L-alanyl-D-glutamyl-meso-2,6-diaminopimeloyl-D-alanyl-D-alanine + UDP + H(+). Its pathway is cell wall biogenesis; peptidoglycan biosynthesis. Cell wall formation. Catalyzes the transfer of a GlcNAc subunit on undecaprenyl-pyrophosphoryl-MurNAc-pentapeptide (lipid intermediate I) to form undecaprenyl-pyrophosphoryl-MurNAc-(pentapeptide)GlcNAc (lipid intermediate II). The chain is UDP-N-acetylglucosamine--N-acetylmuramyl-(pentapeptide) pyrophosphoryl-undecaprenol N-acetylglucosamine transferase from Klebsiella pneumoniae (strain 342).